Consider the following 757-residue polypeptide: Nitrogen fixation protein FixI (757 aa).

Topologically, residues 1 to 121 (MSCCASSAAI…GEEEGDDLLK (121 aa)) are cytoplasmic. In terms of domain architecture, HMA spans 37-107 (RQTELSVPNA…AIAERGYQTH (71 aa)). A metal cation contacts are provided by Cys48 and Cys51. The helical transmembrane segment at 122–143 (QLILAVAVSGFAATNIMLLSVS) threads the bilayer. Over 144–158 (VWSGADAATRDLFHW) the chain is Extracellular. The helical transmembrane segment at 159–178 (ISALIAGPALIYAGRFFYKS) threads the bilayer. Residues 179 to 185 (AWNAIRH) lie on the Cytoplasmic side of the membrane. Residues 186-206 (GRTNMDVPIALAVSLSYGMSL) form a helical membrane-spanning segment. The Extracellular segment spans residues 207–218 (HETIGHGEHAWF). The helical transmembrane segment at 219 to 239 (DASVTLLFFLLIGRTLDHMMR) threads the bilayer. Residues 240-368 (GRARTAISGL…RARYRRIADR (129 aa)) lie on the Cytoplasmic side of the membrane. A helical transmembrane segment spans residues 369-391 (AARYYSPAVHLLALLTFVGWMLV). The Extracellular portion of the chain corresponds to 392-398 (EGDVRHA). A helical transmembrane segment spans residues 399–416 (MLVAVAVLIITCPCALGL). At 417–688 (AVPVVQVVAA…ETSRHAGQLI (272 aa)) the chain is on the cytoplasmic side. Asp454 (4-aspartylphosphate intermediate) is an active-site residue. Asp634 and Asp638 together coordinate Mg(2+). A helical membrane pass occupies residues 689-708 (RQNFALAIGYNVIAVPIAIL). The Extracellular portion of the chain corresponds to 709–713 (GYATP). A helical transmembrane segment spans residues 714–732 (LVAAVAMSSSSLVVVFNAL). The Cytoplasmic portion of the chain corresponds to 733–757 (RLKRSLAAGRGATPGTLIHSGAVTS).

The protein belongs to the cation transport ATPase (P-type) (TC 3.A.3) family. Type IB subfamily.

Its subcellular location is the cell membrane. The enzyme catalyses ATP + H2O = ADP + phosphate + H(+). Functionally, fixI is a pump of a specific cation involved in symbiotic nitrogen fixation. The four proteins FixG, FixH, FixI, and FixS may participate in a membrane-bound complex coupling the FixI cation pump with a redox process catalyzed by FixG. The chain is Nitrogen fixation protein FixI (fixI) from Rhizobium meliloti (strain 1021) (Ensifer meliloti).